The sequence spans 817 residues: Nuclear hormone receptor family member nhr-48 (817 aa).

The interval 49–91 (YNDDKDDPFYEDEGSGGGTSGGGKKSSRKRANTTSSSGGNEKE) is disordered. Acidic residues predominate over residues 52 to 62 (DKDDPFYEDEG). Positions 63 to 72 (SGGGTSGGGK) are enriched in gly residues. The segment at residues 97–172 (NKVCRVCGDK…VGMKKEWIMS (76 aa)) is a DNA-binding region (nuclear receptor). 2 consecutive NR C4-type zinc fingers follow at residues 100–120 (CRVC…CESC) and 136–155 (CPFN…CQRC). Positions 202 to 212 (ACMEDESENSY) are enriched in acidic residues. Disordered stretches follow at residues 202–221 (ACME…PSHQ) and 258–284 (MNFY…SSQL). Residues 273 to 284 (LPSNSCASSSQL) show a composition bias toward polar residues.

Belongs to the nuclear hormone receptor family.

The protein localises to the nucleus. Orphan nuclear receptor. The protein is Nuclear hormone receptor family member nhr-48 (nhr-48) of Caenorhabditis elegans.